We begin with the raw amino-acid sequence, 123 residues long: Small ribosomal subunit protein uS12 (123 aa).

At Asp89 the chain carries 3-methylthioaspartic acid. The tract at residues 103 to 123 (DTSGVQDRRQGRSKYGAKRPK) is disordered. Residues 113 to 123 (GRSKYGAKRPK) show a composition bias toward basic residues.

The protein belongs to the universal ribosomal protein uS12 family. Part of the 30S ribosomal subunit. Contacts proteins S8 and S17. May interact with IF1 in the 30S initiation complex.

In terms of biological role, with S4 and S5 plays an important role in translational accuracy. Functionally, interacts with and stabilizes bases of the 16S rRNA that are involved in tRNA selection in the A site and with the mRNA backbone. Located at the interface of the 30S and 50S subunits, it traverses the body of the 30S subunit contacting proteins on the other side and probably holding the rRNA structure together. The combined cluster of proteins S8, S12 and S17 appears to hold together the shoulder and platform of the 30S subunit. The sequence is that of Small ribosomal subunit protein uS12 from Nitratidesulfovibrio vulgaris (strain ATCC 29579 / DSM 644 / CCUG 34227 / NCIMB 8303 / VKM B-1760 / Hildenborough) (Desulfovibrio vulgaris).